The primary structure comprises 179 residues: Large ribosomal subunit protein uL5 (179 aa).

This sequence belongs to the universal ribosomal protein uL5 family. As to quaternary structure, part of the 50S ribosomal subunit; part of the 5S rRNA/L5/L18/L25 subcomplex. Contacts the 5S rRNA and the P site tRNA. Forms a bridge to the 30S subunit in the 70S ribosome.

Functionally, this is one of the proteins that bind and probably mediate the attachment of the 5S RNA into the large ribosomal subunit, where it forms part of the central protuberance. In the 70S ribosome it contacts protein S13 of the 30S subunit (bridge B1b), connecting the 2 subunits; this bridge is implicated in subunit movement. Contacts the P site tRNA; the 5S rRNA and some of its associated proteins might help stabilize positioning of ribosome-bound tRNAs. The protein is Large ribosomal subunit protein uL5 of Vibrio cholerae serotype O1 (strain ATCC 39541 / Classical Ogawa 395 / O395).